The following is a 400-amino-acid chain: GTPase Obg (400 aa).

In terms of domain architecture, Obg spans 1-159; the sequence is MRFVDEAVIT…REIRLELKVL (159 aa). The 174-residue stretch at 160 to 333 folds into the OBG-type G domain; that stretch reads ADVGLLGMPN…VVYYLMDQIE (174 aa). Residues 166–173, 191–195, 213–216, 283–286, and 314–316 each bind GTP; these read GMPNAGKS, FTTMV, DIPG, NKLD, and SGL. Mg(2+)-binding residues include Ser-173 and Thr-193.

This sequence belongs to the TRAFAC class OBG-HflX-like GTPase superfamily. OBG GTPase family. In terms of assembly, monomer. Mg(2+) is required as a cofactor.

It is found in the cytoplasm. An essential GTPase which binds GTP, GDP and possibly (p)ppGpp with moderate affinity, with high nucleotide exchange rates and a fairly low GTP hydrolysis rate. Plays a role in control of the cell cycle, stress response, ribosome biogenesis and in those bacteria that undergo differentiation, in morphogenesis control. This is GTPase Obg from Acinetobacter baylyi (strain ATCC 33305 / BD413 / ADP1).